The chain runs to 145 residues: Bacilliredoxin SERP1075 (145 aa).

It belongs to the bacilliredoxin family.

In Staphylococcus epidermidis (strain ATCC 35984 / DSM 28319 / BCRC 17069 / CCUG 31568 / BM 3577 / RP62A), this protein is Bacilliredoxin SERP1075.